The chain runs to 438 residues: Adenylosuccinate synthetase (438 aa).

GTP is bound by residues 13 to 19 (GDEGKGK) and 41 to 43 (GHT). The active-site Proton acceptor is the aspartate 14. Positions 14 and 41 each coordinate Mg(2+). IMP is bound by residues 14-17 (DEGK), 39-42 (NAGH), threonine 130, arginine 144, glutamine 225, threonine 240, and arginine 310. The active-site Proton donor is histidine 42. 306–312 (ATTGRLR) serves as a coordination point for substrate. GTP is bound by residues arginine 312, 338-340 (KLD), and 421-423 (STG).

The protein belongs to the adenylosuccinate synthetase family. As to quaternary structure, homodimer. The cofactor is Mg(2+).

The protein resides in the cytoplasm. The catalysed reaction is IMP + L-aspartate + GTP = N(6)-(1,2-dicarboxyethyl)-AMP + GDP + phosphate + 2 H(+). Its pathway is purine metabolism; AMP biosynthesis via de novo pathway; AMP from IMP: step 1/2. Its function is as follows. Plays an important role in the de novo pathway of purine nucleotide biosynthesis. Catalyzes the first committed step in the biosynthesis of AMP from IMP. This is Adenylosuccinate synthetase from Vibrio parahaemolyticus serotype O3:K6 (strain RIMD 2210633).